We begin with the raw amino-acid sequence, 636 residues long: Methionine--tRNA ligase (636 aa).

Positions 12–22 (YYVNGDPHVGS) match the 'HIGH' region motif. Zn(2+) is bound by residues Cys127, Cys130, Cys145, and Cys148. The 'KMSKS' region motif lies at 298 to 302 (KMSKS). Lys301 lines the ATP pocket. A tRNA-binding domain is found at 535–636 (EFNKIEIKVV…KTVEAGAIVS (102 aa)).

The protein belongs to the class-I aminoacyl-tRNA synthetase family. MetG type 2A subfamily. In terms of assembly, homodimer. The cofactor is Zn(2+).

It localises to the cytoplasm. It carries out the reaction tRNA(Met) + L-methionine + ATP = L-methionyl-tRNA(Met) + AMP + diphosphate. Is required not only for elongation of protein synthesis but also for the initiation of all mRNA translation through initiator tRNA(fMet) aminoacylation. This chain is Methionine--tRNA ligase (metG), found in Fusobacterium nucleatum subsp. nucleatum (strain ATCC 25586 / DSM 15643 / BCRC 10681 / CIP 101130 / JCM 8532 / KCTC 2640 / LMG 13131 / VPI 4355).